The sequence spans 216 residues: Octanoyltransferase (216 aa).

In terms of domain architecture, BPL/LPL catalytic spans 24–212 (KFRKECILFL…NLCSFLEPIN (189 aa)). Residues 69 to 76 (RGGDFTAH), 140 to 142 (SIG), and 153 to 155 (GIA) each bind substrate. Residue cysteine 171 is the Acyl-thioester intermediate of the active site.

Belongs to the LipB family.

The protein localises to the cytoplasm. It catalyses the reaction octanoyl-[ACP] + L-lysyl-[protein] = N(6)-octanoyl-L-lysyl-[protein] + holo-[ACP] + H(+). It participates in protein modification; protein lipoylation via endogenous pathway; protein N(6)-(lipoyl)lysine from octanoyl-[acyl-carrier-protein]: step 1/2. In terms of biological role, catalyzes the transfer of endogenously produced octanoic acid from octanoyl-acyl-carrier-protein onto the lipoyl domains of lipoate-dependent enzymes. Lipoyl-ACP can also act as a substrate although octanoyl-ACP is likely to be the physiological substrate. The sequence is that of Octanoyltransferase from Leptospira interrogans serogroup Icterohaemorrhagiae serovar Lai (strain 56601).